We begin with the raw amino-acid sequence, 75 residues long: Small ribosomal subunit protein bS18 (75 aa).

Residues 1 to 11 (MAAKPFFRRRK) show a composition bias toward basic residues. The disordered stretch occupies residues 1 to 21 (MAAKPFFRRRKTDPFEGENAP).

It belongs to the bacterial ribosomal protein bS18 family. In terms of assembly, part of the 30S ribosomal subunit. Forms a tight heterodimer with protein bS6.

Its function is as follows. Binds as a heterodimer with protein bS6 to the central domain of the 16S rRNA, where it helps stabilize the platform of the 30S subunit. This chain is Small ribosomal subunit protein bS18, found in Jannaschia sp. (strain CCS1).